A 185-amino-acid chain; its full sequence is Ribosome-recycling factor (185 aa).

The protein belongs to the RRF family.

Its subcellular location is the cytoplasm. Its function is as follows. Responsible for the release of ribosomes from messenger RNA at the termination of protein biosynthesis. May increase the efficiency of translation by recycling ribosomes from one round of translation to another. This chain is Ribosome-recycling factor, found in Streptococcus pyogenes serotype M28 (strain MGAS6180).